A 376-amino-acid chain; its full sequence is Putative glutamate--cysteine ligase 2 (376 aa).

It belongs to the glutamate--cysteine ligase type 2 family. YbdK subfamily.

It catalyses the reaction L-cysteine + L-glutamate + ATP = gamma-L-glutamyl-L-cysteine + ADP + phosphate + H(+). Its function is as follows. ATP-dependent carboxylate-amine ligase which exhibits weak glutamate--cysteine ligase activity. In Paracoccus denitrificans (strain Pd 1222), this protein is Putative glutamate--cysteine ligase 2.